We begin with the raw amino-acid sequence, 274 residues long: NAD-dependent protein deacetylase (274 aa).

In terms of domain architecture, Deacetylase sirtuin-type spans 1 to 274 (MDSRMSDLQA…CDEVLAEVVP (274 aa)). NAD(+) contacts are provided by residues 26-46 (GAGCSTASGIPDYRDGQGQWK) and 104-107 (QNVD). H122 (proton acceptor) is an active-site residue. Zn(2+)-binding residues include C130, C133, C181, and C184. NAD(+)-binding positions include 221-223 (GSS), 247-249 (NLG), and C265.

Belongs to the sirtuin family. Class II subfamily. It depends on Zn(2+) as a cofactor.

Its subcellular location is the cytoplasm. It catalyses the reaction N(6)-acetyl-L-lysyl-[protein] + NAD(+) + H2O = 2''-O-acetyl-ADP-D-ribose + nicotinamide + L-lysyl-[protein]. Functionally, NAD-dependent protein deacetylase which modulates the activities of several enzymes which are inactive in their acetylated form. In Bordetella pertussis (strain Tohama I / ATCC BAA-589 / NCTC 13251), this protein is NAD-dependent protein deacetylase.